The chain runs to 103 residues: Cycloviolacin-O9 (103 aa).

The N-terminal stretch at 1-9 (AAFALPAFA) is a signal peptide. Positions 10 to 69 (SFEKDVITPAALEAVLNRKAPLYNIMMENDAILNVIANVKTVISNPVLEEALLKTNHGVN) are excised as a propeptide. The cyclopeptide (Gly-Asn) cross-link spans 70–99 (GIPCGESCVWIPCLTSAVGCSCKSKVCYRN). Cystine bridges form between C73–C89, C77–C91, and C82–C96. Residues 100–103 (SLDN) constitute a propeptide that is removed on maturation.

This is a cyclic peptide.

Probably participates in a plant defense mechanism. The sequence is that of Cycloviolacin-O9 from Viola biflora (Yellow wood violet).